The following is a 391-amino-acid chain: Processive diacylglycerol beta-glucosyltransferase (391 aa).

It belongs to the glycosyltransferase 28 family. UgtP subfamily.

The protein localises to the cell membrane. The enzyme catalyses a 1,2-diacyl-3-O-(beta-D-glucopyranosyl)-sn-glycerol + UDP-alpha-D-glucose = a 1,2-diacyl-3-O-(beta-D-Glc-(1-&gt;6)-beta-D-Glc)-sn-glycerol + UDP + H(+). It catalyses the reaction a 1,2-diacyl-sn-glycerol + UDP-alpha-D-glucose = a 1,2-diacyl-3-O-(beta-D-glucopyranosyl)-sn-glycerol + UDP + H(+). The protein operates within glycolipid metabolism; diglucosyl-diacylglycerol biosynthesis. Processive glucosyltransferase involved in the biosynthesis of both the bilayer- and non-bilayer-forming membrane glucolipids. Is able to successively transfer two glucosyl residues to diacylglycerol (DAG), thereby catalyzing the formation of beta-monoglucosyl-DAG (3-O-(beta-D-glucopyranosyl)-1,2-diacyl-sn-glycerol) and beta-diglucosyl-DAG (3-O-(beta-D-glucopyranosyl-beta-(1-&gt;6)-D-glucopyranosyl)-1,2-diacyl-sn-glycerol). Beta-diglucosyl-DAG is the predominant glycolipid found in Bacillales and is also used as a membrane anchor for lipoteichoic acid (LTA). This chain is Processive diacylglycerol beta-glucosyltransferase, found in Staphylococcus aureus (strain MW2).